The chain runs to 180 residues: Large ribosomal subunit protein uL5 (180 aa).

It belongs to the universal ribosomal protein uL5 family. In terms of assembly, part of the 50S ribosomal subunit; part of the 5S rRNA/L5/L18/L25 subcomplex. Contacts the 5S rRNA and the P site tRNA. Forms a bridge to the 30S subunit in the 70S ribosome.

Its function is as follows. This is one of the proteins that bind and probably mediate the attachment of the 5S RNA into the large ribosomal subunit, where it forms part of the central protuberance. In the 70S ribosome it contacts protein S13 of the 30S subunit (bridge B1b), connecting the 2 subunits; this bridge is implicated in subunit movement. Contacts the P site tRNA; the 5S rRNA and some of its associated proteins might help stabilize positioning of ribosome-bound tRNAs. This Brevibacillus brevis (strain 47 / JCM 6285 / NBRC 100599) protein is Large ribosomal subunit protein uL5.